The primary structure comprises 463 residues: Abscisic acid 8'-hydroxylase 3 (463 aa).

A helical membrane pass occupies residues 6–26 (LFLTLSAAALFLCLLRFIAGV). Cys411 is a heme binding site.

This sequence belongs to the cytochrome P450 family. Heme serves as cofactor. As to expression, mainly expressed in flower buds, flowers, rosette leaves and roots. Lower expression in mature siliques and inflorescence stems. Not expressed in dry seeds.

It localises to the membrane. It catalyses the reaction 2-cis-(+)-abscisate + reduced [NADPH--hemoprotein reductase] + O2 = (+)-8'-hydroxyabscisate + oxidized [NADPH--hemoprotein reductase] + H2O + H(+). The protein operates within plant hormone degradation; abscisic acid degradation. Its activity is regulated as follows. Inhibited by tetcyclcis, but not by metyrapone. Its function is as follows. Involved in the oxidative degradation of abscisic acid, but not in the isomerization of the produced 8'-hydroxyabscisic acid (8'-OH-ABA) to (-)-phaseic acid (PA). Involved in the control of postgermination growth. The chain is Abscisic acid 8'-hydroxylase 3 (CYP707A3) from Arabidopsis thaliana (Mouse-ear cress).